Consider the following 297-residue polypeptide: Phospholipid scramblase 2 (297 aa).

The proline-rich domain (PRD) stretch occupies residues 1–72 (MRSWNSLFCL…NQPGRPEGVP (72 aa)). Residues 1–276 (MRSWNSLFCL…IQFPRDLDVK (276 aa)) lie on the Cytoplasmic side of the membrane. Position 149 is a phosphothreonine; by PKC (T149). S-palmitoyl cysteine attachment occurs at residues C172, C173, C174, C176, and C177. The chain crosses the membrane as a helical span at residues 277–293 (MKAVMIGACFLIDYMFF). The Extracellular portion of the chain corresponds to 294 to 297 (ERTR).

Belongs to the phospholipid scramblase family. Ca(2+) is required as a cofactor. Expression of isoform 1 seems restricted to testis.

The protein localises to the membrane. It localises to the nucleus. It carries out the reaction a 1,2-diacyl-sn-glycero-3-phosphocholine(in) = a 1,2-diacyl-sn-glycero-3-phosphocholine(out). In terms of biological role, may catalyze calcium-induced ATP-independent rapid bidirectional and non-specific movement of phospholipids (lipid scrambling or lipid flip-flop) between the inner and outer leaflet of the plasma membrane. Its function is as follows. Has no phospholipid scramblase activity, due to the lack of a N-terminal proline-rich domain. This is Phospholipid scramblase 2 from Homo sapiens (Human).